A 426-amino-acid chain; its full sequence is Glutamate-1-semialdehyde 2,1-aminomutase (426 aa).

Lysine 265 carries the N6-(pyridoxal phosphate)lysine modification.

Belongs to the class-III pyridoxal-phosphate-dependent aminotransferase family. HemL subfamily. In terms of assembly, homodimer. Pyridoxal 5'-phosphate is required as a cofactor.

It is found in the cytoplasm. The enzyme catalyses (S)-4-amino-5-oxopentanoate = 5-aminolevulinate. It participates in porphyrin-containing compound metabolism; protoporphyrin-IX biosynthesis; 5-aminolevulinate from L-glutamyl-tRNA(Glu): step 2/2. The polypeptide is Glutamate-1-semialdehyde 2,1-aminomutase (Salmonella enteritidis PT4 (strain P125109)).